The chain runs to 371 residues: MSFRKVTIIIWALAVILFLLALHHNFLSLSSLLRNDVSDSGIVGLQPIDFTANFHQHPVNERQEEIPVVIAASEDRLGGTIAAINSIHQNTRSNVIFYIVTFNRTADHLRSWLNSGSLKSIRYKIVNFDTKLLEGKVKEDPDQGESMKPLTFARFYLPILVPSAKKAIYMDDDVIVQGDILALYNTPLKPGHAAAFSEDCDSASTKVMIRGAGNQYNYIGYLDYKKERIRKLSMKASTCSFNPGVFVANLTEWKRQNVTNQLEKWMKLNVEEGLYSRTLAGSITTPPLLIVFYQQHSTIDPMWNVRHLGSSAGKRYSPQFVKAAKLLHWNGHFKPWGRAASYADVWEKWYIPDPTGKFSLIRRHMDTSNIK.

The Cytoplasmic segment spans residues 1 to 5 (MSFRK). A helical; Signal-anchor for type II membrane protein membrane pass occupies residues 6–26 (VTIIIWALAVILFLLALHHNF). Topologically, residues 27 to 371 (LSLSSLLRND…RRHMDTSNIK (345 aa)) are lumenal. Asn-257 carries an N-linked (GlcNAc...) asparagine glycan.

This sequence belongs to the glycosyltransferase 8 family.

It is found in the membrane. The polypeptide is Glycosyltransferase 8 domain-containing protein 1 (Glt8d1) (Rattus norvegicus (Rat)).